The sequence spans 321 residues: Olfactory receptor 51G1 (321 aa).

The Extracellular segment spans residues 1–27; it reads MTILLNSSLQRATFFLTGFQGLEGLHG. Asn6 is a glycosylation site (N-linked (GlcNAc...) asparagine). Residues 28-48 traverse the membrane as a helical segment; sequence WISIPFCFIYLTVILGNLTIL. Over 49-56 the chain is Cytoplasmic; the sequence is HVICTDAT. Residues 57–77 traverse the membrane as a helical segment; that stretch reads LHGPMYYFLGMLAVTDLGLCL. The Extracellular segment spans residues 78 to 101; it reads STLPTVLGIFWFDTREIGIPACFT. Cys99 and Cys191 are oxidised to a cystine. The chain crosses the membrane as a helical span at residues 102–122; the sequence is QLFFIHTLSSMESSVLLSMSI. Topologically, residues 123-141 are cytoplasmic; it reads DRYVAVCNPLHDSTVLTPA. A helical membrane pass occupies residues 142 to 162; the sequence is CIVKMGLSSVLRSALLILPLP. Residues 163–198 are Extracellular-facing; the sequence is FLLKRFQYCHSHVLAHAYCLHLEIMKLACSSIIVNH. The helical transmembrane segment at 199 to 219 threads the bilayer; sequence IYGLFVVACTVGVDSLLIFLS. The Cytoplasmic segment spans residues 220 to 239; sequence YALILRTVLSIASHQERLRA. The helical transmembrane segment at 240–260 threads the bilayer; that stretch reads LNTCVSHICAVLLFYIPMIGL. Residues 261–275 lie on the Extracellular side of the membrane; that stretch reads SLVHRFGEHLPRVVH. A helical membrane pass occupies residues 276–296; it reads LFMSYVYLLVPPLMNPIIYSI. Topologically, residues 297–321 are cytoplasmic; that stretch reads KTKQIRQRIIKKFQFIKSLRCFWKD.

Belongs to the G-protein coupled receptor 1 family.

It localises to the cell membrane. Functionally, odorant receptor. This Homo sapiens (Human) protein is Olfactory receptor 51G1 (OR51G1).